A 436-amino-acid chain; its full sequence is uncharacterized protein (436 aa).

Residues 1–18 form the signal peptide; the sequence is MMKRFVALSMAIFSLSFA.

This is an uncharacterized protein from Aquifex aeolicus (strain VF5).